The primary structure comprises 254 residues: uncharacterized protein (254 aa).

Positions 6–239 (LSVDGVEFAY…NIKAVYGVDA (234 aa)) constitute an ABC transporter domain. Residue 38-45 (GVNGAGKS) participates in ATP binding.

It belongs to the ABC transporter superfamily.

This is an uncharacterized protein from Methanocaldococcus jannaschii (strain ATCC 43067 / DSM 2661 / JAL-1 / JCM 10045 / NBRC 100440) (Methanococcus jannaschii).